Here is a 74-residue protein sequence, read N- to C-terminus: UPF0291 protein lmo0496 (74 aa).

Belongs to the UPF0291 family.

It is found in the cytoplasm. This chain is UPF0291 protein lmo0496, found in Listeria monocytogenes serovar 1/2a (strain ATCC BAA-679 / EGD-e).